We begin with the raw amino-acid sequence, 477 residues long: MQVLHVCSEMFPLLKTGGLADVIGALPAAQIADGVDARVLLPAFPDIRRGVTDAQVVSRRDTFAGHITLLFGHYNGVGIYLIDAPHLYDRPGSPYHDTNLFAYTDNVLRFALLGWVGAEMASGLDPFWRPDVVHAHDWHAGLAPAYLAARGRPAKSVFTVHNLAYQGMFYAHHMNDIQLPWSFFNIHGLEFNGQISFLKAGLYYADHITAVSPTYAREITEPQFAYGMEGLLQQRHREGRLSGVLNGVDEKIWSPETDLLLASRYTRDTLEDKAKNKRQLQIAMGLKVDDKVPLFAVVSRLTSQKGLDLVLEALPGLLEQGGQLALLGAGDPVLQEGFLAAAAEYPGQVGVQIGYHEAFSHRIMGGADVILVPSRFEPCGLTQLYGLKYGTLPLVRRTGGLADTVSDCSLENLADGVASGFVFEDSNAWSLLRAIRRAFVLWSRPSLWRFVQRQAMAMDFSWQVAAKSYRELYYRLK.

Residue Lys15 coordinates ADP-alpha-D-glucose.

The protein belongs to the glycosyltransferase 1 family. Bacterial/plant glycogen synthase subfamily.

It carries out the reaction [(1-&gt;4)-alpha-D-glucosyl](n) + ADP-alpha-D-glucose = [(1-&gt;4)-alpha-D-glucosyl](n+1) + ADP + H(+). It functions in the pathway glycan biosynthesis; glycogen biosynthesis. Functionally, synthesizes alpha-1,4-glucan chains using ADP-glucose. The polypeptide is Glycogen synthase (Shigella dysenteriae serotype 1 (strain Sd197)).